The primary structure comprises 361 residues: FK506-binding protein 39 kDa (361 aa).

Residues 122 to 256 form a disordered region; sequence LVDEEDEEEE…PSSPKTRTLK (135 aa). Over residues 123 to 174 the composition is skewed to acidic residues; sequence VDEEDEEEEESDEDYDLSPTEEDLVETVSGDEESEEESESEDNSASEEDELD. Residue serine 192 is modified to Phosphoserine. The span at 208-227 shows a compositional bias: basic and acidic residues; sequence QKVEGTPVKEKKVAFAEKLE. Residue threonine 213 is modified to Phosphothreonine. Over residues 241-252 the composition is skewed to polar residues; the sequence is QASSNAPSSPKT. Serine 249 is modified (phosphoserine). In terms of domain architecture, PPIase FKBP-type spans 275 to 361; it reads GKKVEMRYIG…VFEVKLVRVH (87 aa).

This sequence belongs to the FKBP-type PPIase family. FKBP3/4 subfamily.

It is found in the nucleus. The protein localises to the nucleolus. The catalysed reaction is [protein]-peptidylproline (omega=180) = [protein]-peptidylproline (omega=0). PPIase that acts as a histone chaperone. Histone proline isomerase that increases the rate of cis-trans isomerization at prolines on the histone H3 N-terminal tail. Proline isomerization influences H3 methylation thereby regulating gene expression. The protein is FK506-binding protein 39 kDa of Schizosaccharomyces pombe (strain 972 / ATCC 24843) (Fission yeast).